Reading from the N-terminus, the 124-residue chain is Small ribosomal subunit protein uS12 (124 aa).

The interval 1–25 (MATINQLVRKPRQASTYKSASPALD) is disordered.

It belongs to the universal ribosomal protein uS12 family. Part of the 30S ribosomal subunit. Contacts proteins S8 and S17. May interact with IF1 in the 30S initiation complex.

Its function is as follows. With S4 and S5 plays an important role in translational accuracy. In terms of biological role, interacts with and stabilizes bases of the 16S rRNA that are involved in tRNA selection in the A site and with the mRNA backbone. Located at the interface of the 30S and 50S subunits, it traverses the body of the 30S subunit contacting proteins on the other side and probably holding the rRNA structure together. The combined cluster of proteins S8, S12 and S17 appears to hold together the shoulder and platform of the 30S subunit. This Xylella fastidiosa (strain 9a5c) protein is Small ribosomal subunit protein uS12.